A 445-amino-acid polypeptide reads, in one-letter code: Phosphoglucosamine mutase (445 aa).

Ser99 serves as the catalytic Phosphoserine intermediate. Mg(2+)-binding residues include Ser99, Asp242, Asp244, and Asp246. Ser99 is modified (phosphoserine).

The protein belongs to the phosphohexose mutase family. Mg(2+) serves as cofactor. Activated by phosphorylation.

The catalysed reaction is alpha-D-glucosamine 1-phosphate = D-glucosamine 6-phosphate. Its function is as follows. Catalyzes the conversion of glucosamine-6-phosphate to glucosamine-1-phosphate. The sequence is that of Phosphoglucosamine mutase from Helicobacter acinonychis (strain Sheeba).